A 659-amino-acid polypeptide reads, in one-letter code: Threonine--tRNA ligase (659 aa).

A TGS domain is found at Met1–Thr60. Residues Asp252–Pro552 form a catalytic region. 3 residues coordinate Zn(2+): Cys349, His400, and His529.

Belongs to the class-II aminoacyl-tRNA synthetase family. In terms of assembly, homodimer. Zn(2+) is required as a cofactor.

The protein resides in the cytoplasm. It carries out the reaction tRNA(Thr) + L-threonine + ATP = L-threonyl-tRNA(Thr) + AMP + diphosphate + H(+). In terms of biological role, catalyzes the attachment of threonine to tRNA(Thr) in a two-step reaction: L-threonine is first activated by ATP to form Thr-AMP and then transferred to the acceptor end of tRNA(Thr). Also edits incorrectly charged L-seryl-tRNA(Thr). The chain is Threonine--tRNA ligase from Thermus thermophilus (strain ATCC BAA-163 / DSM 7039 / HB27).